Consider the following 332-residue polypeptide: Glycerol-3-phosphate dehydrogenase [NAD(P)+] (332 aa).

NADPH contacts are provided by Ser-11, Phe-12, Lys-32, and Lys-106. Sn-glycerol 3-phosphate is bound by residues Lys-106, Gly-137, and Ser-139. Position 141 (Ala-141) interacts with NADPH. 5 residues coordinate sn-glycerol 3-phosphate: Lys-192, Asp-245, Ser-255, Arg-256, and Asn-257. The Proton acceptor role is filled by Lys-192. Arg-256 is an NADPH binding site. NADPH is bound by residues Val-280 and Glu-282.

This sequence belongs to the NAD-dependent glycerol-3-phosphate dehydrogenase family.

It localises to the cytoplasm. The enzyme catalyses sn-glycerol 3-phosphate + NAD(+) = dihydroxyacetone phosphate + NADH + H(+). It catalyses the reaction sn-glycerol 3-phosphate + NADP(+) = dihydroxyacetone phosphate + NADPH + H(+). The protein operates within membrane lipid metabolism; glycerophospholipid metabolism. Its function is as follows. Catalyzes the reduction of the glycolytic intermediate dihydroxyacetone phosphate (DHAP) to sn-glycerol 3-phosphate (G3P), the key precursor for phospholipid synthesis. This chain is Glycerol-3-phosphate dehydrogenase [NAD(P)+], found in Staphylococcus aureus (strain Mu3 / ATCC 700698).